The primary structure comprises 448 residues: Ribosomal protein uS12 methylthiotransferase RimO (448 aa).

One can recognise an MTTase N-terminal domain in the interval 7 to 119 (QSLHLISLGC…IDSMIAQRRS (113 aa)). Cys16, Cys50, Cys82, Cys151, Cys155, and Cys158 together coordinate [4Fe-4S] cluster. Residues 137-366 (IGSSFHAYIK…NKIIQSQYKA (230 aa)) enclose the Radical SAM core domain.

This sequence belongs to the methylthiotransferase family. RimO subfamily. [4Fe-4S] cluster serves as cofactor.

The protein resides in the cytoplasm. It carries out the reaction L-aspartate(89)-[ribosomal protein uS12]-hydrogen + (sulfur carrier)-SH + AH2 + 2 S-adenosyl-L-methionine = 3-methylsulfanyl-L-aspartate(89)-[ribosomal protein uS12]-hydrogen + (sulfur carrier)-H + 5'-deoxyadenosine + L-methionine + A + S-adenosyl-L-homocysteine + 2 H(+). Functionally, catalyzes the methylthiolation of an aspartic acid residue of ribosomal protein uS12. The protein is Ribosomal protein uS12 methylthiotransferase RimO of Helicobacter hepaticus (strain ATCC 51449 / 3B1).